The primary structure comprises 429 residues: Phosphoribosylamine--glycine ligase (429 aa).

Residues 109–316 (KDFLARHKIP…LVELCLKACD (208 aa)) enclose the ATP-grasp domain. Residue 135 to 196 (LREKGTPIVV…EEFLDGEEAS (62 aa)) coordinates ATP. 2 residues coordinate Mg(2+): Glu286 and Asn288.

This sequence belongs to the GARS family. Mg(2+) is required as a cofactor. Mn(2+) serves as cofactor.

The catalysed reaction is 5-phospho-beta-D-ribosylamine + glycine + ATP = N(1)-(5-phospho-beta-D-ribosyl)glycinamide + ADP + phosphate + H(+). It functions in the pathway purine metabolism; IMP biosynthesis via de novo pathway; N(1)-(5-phospho-D-ribosyl)glycinamide from 5-phospho-alpha-D-ribose 1-diphosphate: step 2/2. The polypeptide is Phosphoribosylamine--glycine ligase (Haemophilus influenzae (strain ATCC 51907 / DSM 11121 / KW20 / Rd)).